The primary structure comprises 137 residues: Large ribosomal subunit protein uL16 (137 aa).

Belongs to the universal ribosomal protein uL16 family. In terms of assembly, part of the 50S ribosomal subunit.

Binds 23S rRNA and is also seen to make contacts with the A and possibly P site tRNAs. This Bartonella bacilliformis (strain ATCC 35685 / KC583 / Herrer 020/F12,63) protein is Large ribosomal subunit protein uL16.